The primary structure comprises 318 residues: NADH-ubiquinone oxidoreductase chain 1 (318 aa).

8 helical membrane passes run 2–22, 76–96, 100–120, 146–166, 171–191, 222–242, 253–273, and 294–314; these read PMIN…FLML, ALAL…IPLI, LGLL…LWSG, LALI…SALI, HSWL…STLA, LFFM…TMIF, ELYT…FLWI, and LPLT…TSGI.

It belongs to the complex I subunit 1 family. In terms of assembly, core subunit of respiratory chain NADH dehydrogenase (Complex I) which is composed of 45 different subunits.

It localises to the mitochondrion inner membrane. It catalyses the reaction a ubiquinone + NADH + 5 H(+)(in) = a ubiquinol + NAD(+) + 4 H(+)(out). Core subunit of the mitochondrial membrane respiratory chain NADH dehydrogenase (Complex I) which catalyzes electron transfer from NADH through the respiratory chain, using ubiquinone as an electron acceptor. Essential for the catalytic activity and assembly of complex I. This is NADH-ubiquinone oxidoreductase chain 1 (MT-ND1) from Pongo abelii (Sumatran orangutan).